A 326-amino-acid chain; its full sequence is Pyruvate dehydrogenase E1 component subunit alpha (326 aa).

As to quaternary structure, heterodimer of an alpha and a beta chain. Thiamine diphosphate is required as a cofactor.

The catalysed reaction is N(6)-[(R)-lipoyl]-L-lysyl-[protein] + pyruvate + H(+) = N(6)-[(R)-S(8)-acetyldihydrolipoyl]-L-lysyl-[protein] + CO2. Its function is as follows. The pyruvate dehydrogenase complex catalyzes the overall conversion of pyruvate to acetyl-CoA and CO(2). It contains multiple copies of three enzymatic components: pyruvate dehydrogenase (E1), dihydrolipoamide acetyltransferase (E2) and lipoamide dehydrogenase (E3). This chain is Pyruvate dehydrogenase E1 component subunit alpha (pdhA), found in Rickettsia conorii (strain ATCC VR-613 / Malish 7).